The following is a 222-amino-acid chain: Small ribosomal subunit protein uS2 (222 aa).

The protein belongs to the universal ribosomal protein uS2 family.

This chain is Small ribosomal subunit protein uS2, found in Karelsulcia muelleri (strain GWSS) (Sulcia muelleri).